The chain runs to 460 residues: Bifunctional protein GlmU (460 aa).

A pyrophosphorylase region spans residues 1-235 (MALSAAIVLA…PLTVEGVNDR (235 aa)). UDP-N-acetyl-alpha-D-glucosamine contacts are provided by residues 9–12 (LAAG), lysine 23, glutamine 76, and 81–82 (GT). Aspartate 109 contributes to the Mg(2+) binding site. 4 residues coordinate UDP-N-acetyl-alpha-D-glucosamine: glycine 146, glutamate 161, asparagine 176, and asparagine 233. Asparagine 233 provides a ligand contact to Mg(2+). The tract at residues 236–256 (VQLAALSKTYNRRVCERWMRD) is linker. Positions 257 to 460 (GVTILDPETT…VEGWKPAWER (204 aa)) are N-acetyltransferase. UDP-N-acetyl-alpha-D-glucosamine-binding residues include arginine 338 and lysine 356. Histidine 368 serves as the catalytic Proton acceptor. Tyrosine 371 and asparagine 382 together coordinate UDP-N-acetyl-alpha-D-glucosamine. Acetyl-CoA contacts are provided by residues 391–392 (NY) and alanine 428.

This sequence in the N-terminal section; belongs to the N-acetylglucosamine-1-phosphate uridyltransferase family. The protein in the C-terminal section; belongs to the transferase hexapeptide repeat family. In terms of assembly, homotrimer. The cofactor is Mg(2+).

The protein localises to the cytoplasm. The enzyme catalyses alpha-D-glucosamine 1-phosphate + acetyl-CoA = N-acetyl-alpha-D-glucosamine 1-phosphate + CoA + H(+). The catalysed reaction is N-acetyl-alpha-D-glucosamine 1-phosphate + UTP + H(+) = UDP-N-acetyl-alpha-D-glucosamine + diphosphate. The protein operates within nucleotide-sugar biosynthesis; UDP-N-acetyl-alpha-D-glucosamine biosynthesis; N-acetyl-alpha-D-glucosamine 1-phosphate from alpha-D-glucosamine 6-phosphate (route II): step 2/2. It participates in nucleotide-sugar biosynthesis; UDP-N-acetyl-alpha-D-glucosamine biosynthesis; UDP-N-acetyl-alpha-D-glucosamine from N-acetyl-alpha-D-glucosamine 1-phosphate: step 1/1. Its pathway is bacterial outer membrane biogenesis; LPS lipid A biosynthesis. Catalyzes the last two sequential reactions in the de novo biosynthetic pathway for UDP-N-acetylglucosamine (UDP-GlcNAc). The C-terminal domain catalyzes the transfer of acetyl group from acetyl coenzyme A to glucosamine-1-phosphate (GlcN-1-P) to produce N-acetylglucosamine-1-phosphate (GlcNAc-1-P), which is converted into UDP-GlcNAc by the transfer of uridine 5-monophosphate (from uridine 5-triphosphate), a reaction catalyzed by the N-terminal domain. The chain is Bifunctional protein GlmU from Bifidobacterium longum (strain NCC 2705).